A 187-amino-acid chain; its full sequence is UPF0301 protein YqgE (187 aa).

It belongs to the UPF0301 (AlgH) family.

This Escherichia coli O139:H28 (strain E24377A / ETEC) protein is UPF0301 protein YqgE.